We begin with the raw amino-acid sequence, 525 residues long: MWGLQPPTSIPPPPPPTELTPSTYPAMVNGYPPPAASAQSCSSSGGQSELYMPLQRVMAPTGGRNSIKYRDYTPCRNTTKLFYVDNKASDIDTYNKDANHSNFRTTVIHNQDLDADTAATESIQLDNRSCWGGDLKTAVRTNCPNVSSFFQSNSVRVRMMWKRDPPTSTAPPSAVGSGYSVPGAQYKWYDLTVPEGNYALCELIDLLNEGIVQLYLSEGRQNNVQKSDIGVKFDTRNFGLLRDPVTGLVTPGTYVYKGYHPDIVLLPGCAIDFTYSRLSLLLGIGKREPYSKGFVITYEDLQGGDIPALLDLDSVDVNDADGEVIELDNAAPLLHDSAGVSYNVIYDQVTGKPVTAYRSWMLAYNVPNSQANQTTLLTVPDMAGGIGAMYTSLPDTFIAPTGFKEDNTTNLCPVVGMNLFPTYNKIYYQAASTYVQRLENSCQSATAAFNRFPENEILKQAPPMNVSSVCDNQPAVVQQGVLPVKSSLPGLQRVLITDDQRRPIPYVYKSIATVQPTVLSSATLQ.

The tract at residues Met1–Gln47 is disordered. The segment covering Thr8–Glu18 has biased composition (pro residues). Residues Ala36–Gln47 are compositionally biased toward low complexity.

This sequence belongs to the adenoviridae penton family. As to quaternary structure, interacts with the fiber protein (via N-terminal tail region). Interacts with the capsid vertex protein; this interaction binds the penton base to neighboring peripentonal hexons.

The protein localises to the virion. The protein resides in the host nucleus. Functionally, major capsid protein that self-associates to form penton base pentamers, each in the shape of a pentagon, situated at the 12 vertices of the pseudo T=25 capsid. Involved in virus secondary attachment to host cell after initial attachment by the fiber protein, and in endocytosis of virions. As the virus enters the host cell, penton proteins are shed concomitant with virion acidification in the endosome. This Galliformes (FAdV-10) protein is Penton protein.